The following is a 206-amino-acid chain: Large ribosomal subunit protein uL4 (206 aa).

The tract at residues 44 to 87 is disordered; it reads KRQGTQKAKTRSEVRGGGRKPWRQKGTGHARQGSTRSPQWTGGG. Residues 60–71 show a composition bias toward basic residues; sequence GGRKPWRQKGTG.

Belongs to the universal ribosomal protein uL4 family. Part of the 50S ribosomal subunit.

One of the primary rRNA binding proteins, this protein initially binds near the 5'-end of the 23S rRNA. It is important during the early stages of 50S assembly. It makes multiple contacts with different domains of the 23S rRNA in the assembled 50S subunit and ribosome. Functionally, forms part of the polypeptide exit tunnel. The protein is Large ribosomal subunit protein uL4 of Agathobacter rectalis (strain ATCC 33656 / DSM 3377 / JCM 17463 / KCTC 5835 / VPI 0990) (Eubacterium rectale).